A 336-amino-acid chain; its full sequence is Nucleoid-associated protein ECA2747 (336 aa).

The segment at 317-336 (KGTPPNLRDQLQRRTSGGKQ) is disordered.

This sequence belongs to the YejK family.

It localises to the cytoplasm. Its subcellular location is the nucleoid. The sequence is that of Nucleoid-associated protein ECA2747 from Pectobacterium atrosepticum (strain SCRI 1043 / ATCC BAA-672) (Erwinia carotovora subsp. atroseptica).